A 231-amino-acid chain; its full sequence is MTTKPILVALDYDNKNHALQLIDQLDPNMCRLKVGKEMFTLFGPQLVKDIHERGFDLFLDLKFHDIPNTVAKAVTAAAELGVWMTNVHASGGLAMMEAAKKALQPYGKEAPMLIAVTVLTSMSDEDLKLIGIDVPAFEHVQRLAKLTKQAELDGVVCSAQEASILKSLLGQDFKLITPGIRPVGSDVGDQHRVMTPPEALAAGADYLVIGRPITKATDPLAALQAIHQSLV.

Substrate contacts are provided by residues D11, K33, 60–69 (DLKFHDIPNT), T120, R181, Q190, G210, and R211. K62 acts as the Proton donor in catalysis.

This sequence belongs to the OMP decarboxylase family. Type 1 subfamily. Homodimer.

The enzyme catalyses orotidine 5'-phosphate + H(+) = UMP + CO2. It functions in the pathway pyrimidine metabolism; UMP biosynthesis via de novo pathway; UMP from orotate: step 2/2. Catalyzes the decarboxylation of orotidine 5'-monophosphate (OMP) to uridine 5'-monophosphate (UMP). The sequence is that of Orotidine 5'-phosphate decarboxylase from Shewanella oneidensis (strain ATCC 700550 / JCM 31522 / CIP 106686 / LMG 19005 / NCIMB 14063 / MR-1).